Consider the following 345-residue polypeptide: Fructose-1,6-bisphosphatase class 1 1 (345 aa).

Residues glutamate 90, aspartate 109, leucine 111, and aspartate 112 each coordinate Mg(2+). Substrate is bound by residues aspartate 112–serine 115 and asparagine 200. Glutamate 272 is a binding site for Mg(2+).

It belongs to the FBPase class 1 family. As to quaternary structure, homotetramer. Mg(2+) serves as cofactor.

It is found in the cytoplasm. The catalysed reaction is beta-D-fructose 1,6-bisphosphate + H2O = beta-D-fructose 6-phosphate + phosphate. Its pathway is carbohydrate biosynthesis; gluconeogenesis. In Nitrobacter hamburgensis (strain DSM 10229 / NCIMB 13809 / X14), this protein is Fructose-1,6-bisphosphatase class 1 1.